The following is a 321-amino-acid chain: Isopenicillin N synthase (321 aa).

The tract at residues Met1–Gly42 is disordered. The isopenicillin N site is built by Arg87, Tyr91, and Tyr188. Arg87, Tyr91, Tyr188, His213, and Asp215 together coordinate N-[(5S)-5-amino-5-carboxypentanoyl]-L-cysteinyl-D-valine. The 109-residue stretch at Thr179–Ala287 folds into the Fe2OG dioxygenase domain. Positions 213, 215, and 269 each coordinate Fe(2+). Arg278 contacts 2-oxoglutarate. Ser280 is an isopenicillin N binding site. Ser280 provides a ligand contact to N-[(5S)-5-amino-5-carboxypentanoyl]-L-cysteinyl-D-valine.

This sequence belongs to the iron/ascorbate-dependent oxidoreductase family. The cofactor is Fe cation. L-ascorbate serves as cofactor.

It catalyses the reaction N-[(5S)-5-amino-5-carboxypentanoyl]-L-cysteinyl-D-valine + O2 = isopenicillin N + 2 H2O. The protein operates within antibiotic biosynthesis; penicillin G biosynthesis; penicillin G from L-alpha-aminoadipate and L-cysteine and L-valine: step 2/3. Functionally, removes, in the presence of oxygen, 4 hydrogen atoms from delta-L-(alpha-aminoadipyl)-L-cysteinyl-D-valine (ACV) to form the azetidinone and thiazolidine rings of isopenicillin. The protein is Isopenicillin N synthase (pcbC) of Streptantibioticus cattleyicolor (Streptomyces cattleya).